A 349-amino-acid chain; its full sequence is MAGSLTASNRRRNAEDSSEIYRWTIGFARFVHYPSSPSPHPVLKPLGKREQYHSPHGTWLSASSSTVSLHIVDELNRSDVILSVKLGQKVLEEHYISKLNFTWPQMSCVSGFPSRGSRAIFVTYMDSANQIQKFALRFSTCDAALEFVEALKEKIKGLKEASTQNQKNKTRCDVSFQSDYNPSDAIIPRATQKEPNMVRPLNSYVPEMLPRIVYEAQYQKSETRSEVSFQSDYNPSIEIFPRATEEEPNMVRFFDSSVPEVLPRPEYEAGQALYPSQSTLNQIPSLPPSFTTLLSGCFPDSTLDAGQTTVKQNPDLKSQILKYMEDSSFQDMLQKVERIIDEIGGNWIT.

It localises to the cytoplasm. In terms of biological role, required for accurate chromosome segregation in meiosis. Required for pairing to occur between homologous chromosomes. Acts in early recombination steps and ensures pairing fidelity and proper repair of meiotic DNA double-strand-breaks. Regulates recombination and pairing of homologous chromosomes during meiotic prophase by controlling transport of RAD50 from cytoplasm to the nucleus. May affect pairing of the gene-rich fraction of the genome rather than preventing pairing between repetitive DNA elements. The sequence is that of Protein POOR HOMOLOGOUS SYNAPSIS 1 from Arabidopsis thaliana (Mouse-ear cress).